Reading from the N-terminus, the 353-residue chain is Protein MGF 360-9L (353 aa).

Belongs to the asfivirus MGF 360 family. Interacts with host STAT1; this interaction mediates STAT1 degradation through apoptosis. Interacts with host STAT2; this interaction mediates STAT2 degradation through the proteasome.

The protein resides in the host cytoplasm. In terms of biological role, plays a role in virus cell tropism, and may be required for efficient virus replication in macrophages. In addition, inhibits IFN-beta-induced IFN-stimulated genes (ISGs) transcription. Mechanistically, degrades host STAT1 and STAT2 through apoptosis and ubiquitin-proteasome pathways respectively. This is Protein MGF 360-9L from African swine fever virus (isolate Tick/Malawi/Lil 20-1/1983) (ASFV).